The chain runs to 411 residues: tRNA pseudouridine synthase Pus10 (411 aa).

The THUMP domain occupies 65 to 192 (ALAKCHLPTR…SGQVKVVRNP (128 aa)). The Nucleophile role is filled by aspartate 244. Residues tyrosine 305 and tyrosine 376 each coordinate substrate.

It belongs to the pseudouridine synthase Pus10 family.

The enzyme catalyses uridine(54) in tRNA = pseudouridine(54) in tRNA. It catalyses the reaction uridine(55) in tRNA = pseudouridine(55) in tRNA. In terms of biological role, responsible for synthesis of pseudouridine from uracil-54 and uracil-55 in the psi GC loop of transfer RNAs. The protein is tRNA pseudouridine synthase Pus10 of Pyrobaculum arsenaticum (strain DSM 13514 / JCM 11321 / PZ6).